The primary structure comprises 371 residues: Putative ribonuclease 3 (371 aa).

Residues 10–136 (AKSVKDKYIP…FLGAVCMAVD (127 aa)) enclose the RNase III domain.

It belongs to the IIV-6 142R family.

It carries out the reaction Endonucleolytic cleavage to 5'-phosphomonoester.. Functionally, digests double-stranded RNA. The protein is Putative ribonuclease 3 of Frog virus 3 (isolate Goorha) (FV-3).